The chain runs to 186 residues: Pyridoxal 5'-phosphate synthase subunit PdxT (186 aa).

47-49 is an L-glutamine binding site; sequence GES. Cysteine 76 (nucleophile) is an active-site residue. L-glutamine contacts are provided by residues arginine 102 and 130–131; that span reads IR. Catalysis depends on charge relay system residues histidine 166 and glutamate 168.

It belongs to the glutaminase PdxT/SNO family. In terms of assembly, in the presence of PdxS, forms a dodecamer of heterodimers. Only shows activity in the heterodimer.

The enzyme catalyses aldehydo-D-ribose 5-phosphate + D-glyceraldehyde 3-phosphate + L-glutamine = pyridoxal 5'-phosphate + L-glutamate + phosphate + 3 H2O + H(+). It catalyses the reaction L-glutamine + H2O = L-glutamate + NH4(+). It functions in the pathway cofactor biosynthesis; pyridoxal 5'-phosphate biosynthesis. Its function is as follows. Catalyzes the hydrolysis of glutamine to glutamate and ammonia as part of the biosynthesis of pyridoxal 5'-phosphate. The resulting ammonia molecule is channeled to the active site of PdxS. This chain is Pyridoxal 5'-phosphate synthase subunit PdxT, found in Staphylococcus epidermidis (strain ATCC 35984 / DSM 28319 / BCRC 17069 / CCUG 31568 / BM 3577 / RP62A).